A 174-amino-acid polypeptide reads, in one-letter code: Methylated-DNA--protein-cysteine methyltransferase (174 aa).

The Nucleophile; methyl group acceptor role is filled by cysteine 141.

The protein belongs to the MGMT family.

Its subcellular location is the cytoplasm. It catalyses the reaction a 6-O-methyl-2'-deoxyguanosine in DNA + L-cysteinyl-[protein] = S-methyl-L-cysteinyl-[protein] + a 2'-deoxyguanosine in DNA. It carries out the reaction a 4-O-methyl-thymidine in DNA + L-cysteinyl-[protein] = a thymidine in DNA + S-methyl-L-cysteinyl-[protein]. In terms of biological role, involved in the cellular defense against the biological effects of O6-methylguanine (O6-MeG) and O4-methylthymine (O4-MeT) in DNA. Repairs the methylated nucleobase in DNA by stoichiometrically transferring the methyl group to a cysteine residue in the enzyme. This is a suicide reaction: the enzyme is irreversibly inactivated. This chain is Methylated-DNA--protein-cysteine methyltransferase, found in Thermococcus kodakarensis (strain ATCC BAA-918 / JCM 12380 / KOD1) (Pyrococcus kodakaraensis (strain KOD1)).